A 382-amino-acid chain; its full sequence is Galactose-1-phosphate uridylyltransferase (382 aa).

Residues Cys52 and Cys55 each contribute to the Zn(2+) site. Residues Ala61 and 77–78 (ND) each bind UDP-alpha-D-glucose. Residue His121 coordinates Zn(2+). Residue Asn185 coordinates UDP-alpha-D-glucose. Residue His196 participates in Zn(2+) binding. His198 functions as the Tele-UMP-histidine intermediate in the catalytic mechanism. Residue Gln200 participates in UDP-alpha-D-glucose binding. Positions 214, 313, 330, and 332 each coordinate Fe cation. UDP-alpha-D-glucose-binding positions include 345–348 (KFLV) and 350–351 (FE).

This sequence belongs to the galactose-1-phosphate uridylyltransferase type 1 family. In terms of assembly, homodimer. Zn(2+) serves as cofactor.

The enzyme catalyses alpha-D-galactose 1-phosphate + UDP-alpha-D-glucose = alpha-D-glucose 1-phosphate + UDP-alpha-D-galactose. It participates in carbohydrate metabolism; galactose metabolism. In terms of biological role, essential for growth on galactose but not for cellulase induction. The sequence is that of Galactose-1-phosphate uridylyltransferase (gal7) from Hypocrea jecorina (Trichoderma reesei).